Reading from the N-terminus, the 456-residue chain is Bifunctional protein GlmU (456 aa).

The interval 1–229 is pyrophosphorylase; the sequence is MLNNAMSVVI…LSEVEGVNNR (229 aa). UDP-N-acetyl-alpha-D-glucosamine contacts are provided by residues 11 to 14, K25, Q76, 81 to 82, 103 to 105, G140, E154, N169, and N227; these read LAAG, GT, and YGD. D105 is a binding site for Mg(2+). N227 is a binding site for Mg(2+). A linker region spans residues 230 to 250; it reads LQLSRLERVYQSEQAEKLLLA. The tract at residues 251–456 is N-acetyltransferase; the sequence is GVMLRDPARF…EGWRRPVKKK (206 aa). UDP-N-acetyl-alpha-D-glucosamine is bound by residues R333 and K351. Residue H363 is the Proton acceptor of the active site. UDP-N-acetyl-alpha-D-glucosamine-binding residues include Y366 and N377. Residues A380, 386 to 387, S405, A423, and R440 each bind acetyl-CoA; that span reads NY.

It in the N-terminal section; belongs to the N-acetylglucosamine-1-phosphate uridyltransferase family. This sequence in the C-terminal section; belongs to the transferase hexapeptide repeat family. As to quaternary structure, homotrimer. Mg(2+) is required as a cofactor.

The protein resides in the cytoplasm. The enzyme catalyses alpha-D-glucosamine 1-phosphate + acetyl-CoA = N-acetyl-alpha-D-glucosamine 1-phosphate + CoA + H(+). The catalysed reaction is N-acetyl-alpha-D-glucosamine 1-phosphate + UTP + H(+) = UDP-N-acetyl-alpha-D-glucosamine + diphosphate. Its pathway is nucleotide-sugar biosynthesis; UDP-N-acetyl-alpha-D-glucosamine biosynthesis; N-acetyl-alpha-D-glucosamine 1-phosphate from alpha-D-glucosamine 6-phosphate (route II): step 2/2. It functions in the pathway nucleotide-sugar biosynthesis; UDP-N-acetyl-alpha-D-glucosamine biosynthesis; UDP-N-acetyl-alpha-D-glucosamine from N-acetyl-alpha-D-glucosamine 1-phosphate: step 1/1. It participates in bacterial outer membrane biogenesis; LPS lipid A biosynthesis. Functionally, catalyzes the last two sequential reactions in the de novo biosynthetic pathway for UDP-N-acetylglucosamine (UDP-GlcNAc). The C-terminal domain catalyzes the transfer of acetyl group from acetyl coenzyme A to glucosamine-1-phosphate (GlcN-1-P) to produce N-acetylglucosamine-1-phosphate (GlcNAc-1-P), which is converted into UDP-GlcNAc by the transfer of uridine 5-monophosphate (from uridine 5-triphosphate), a reaction catalyzed by the N-terminal domain. The sequence is that of Bifunctional protein GlmU from Shigella dysenteriae serotype 1 (strain Sd197).